A 732-amino-acid polypeptide reads, in one-letter code: Catalase-peroxidase (732 aa).

The tract at residues 1 to 26 is disordered; the sequence is MDAKTDDQGGKCPFPHGGGSRGHRNR. Residues 97–219 constitute a cross-link (tryptophyl-tyrosyl-methioninium (Trp-Tyr) (with M-245)); it reads WHSAGTYRTT…LGAVQMGLIY (123 aa). The active-site Proton acceptor is His-98. A cross-link (tryptophyl-tyrosyl-methioninium (Tyr-Met) (with W-97)) is located at residues 219 to 245; sequence YVNPEGPNGNPDPVAAAKDIRETFARM. His-260 is a binding site for heme b.

The protein belongs to the peroxidase family. Peroxidase/catalase subfamily. In terms of assembly, homodimer or homotetramer. Heme b is required as a cofactor. In terms of processing, formation of the three residue Trp-Tyr-Met cross-link is important for the catalase, but not the peroxidase activity of the enzyme.

It carries out the reaction H2O2 + AH2 = A + 2 H2O. The enzyme catalyses 2 H2O2 = O2 + 2 H2O. Bifunctional enzyme with both catalase and broad-spectrum peroxidase activity. In Rhodopseudomonas palustris (strain BisB5), this protein is Catalase-peroxidase.